We begin with the raw amino-acid sequence, 282 residues long: Protein FRG2-like-2 (282 aa).

Basic and acidic residues predominate over residues 1 to 10 (MGKGNEDPDL). Disordered regions lie at residues 1-96 (MGKG…QENC) and 249-282 (GPGD…LGAP). Polar residues-rich tracts occupy residues 13–31 (SSIQ…SFTE), 58–68 (RQAGSDPNPNK), and 79–94 (GNST…SYQE).

It belongs to the FRG2 family.

The protein resides in the nucleus. In Homo sapiens (Human), this protein is Protein FRG2-like-2 (FRG2C).